The primary structure comprises 177 residues: MSGQNIDPAANQVRQKERPRDMTTSKERHSVSKRLQQELRTLLMSGDPGITAFPDGDNLFKWVATLDGPKDTVYESLKYKLTLEFPSDYPYKPPVVKFTTPCWHPNVDQSGNICLDILKENWTASYDVRTILLSLQSLLGEPNNASPLNAQAADMWSNQTEYKKVLHEKYKTAQSDK.

The tract at residues 1–31 (MSGQNIDPAANQVRQKERPRDMTTSKERHSV) is disordered. The span at 14–30 (RQKERPRDMTTSKERHS) shows a compositional bias: basic and acidic residues. One can recognise a UBC core domain in the interval 30–175 (SVSKRLQQEL…LHEKYKTAQS (146 aa)). The active-site Glycyl thioester intermediate is C114.

The protein belongs to the ubiquitin-conjugating enzyme family. As to quaternary structure, component of the APC/C complex. Autoubiquitinated by the APC/C complex, leading to its degradation by the proteasome.

It carries out the reaction S-ubiquitinyl-[E1 ubiquitin-activating enzyme]-L-cysteine + [E2 ubiquitin-conjugating enzyme]-L-cysteine = [E1 ubiquitin-activating enzyme]-L-cysteine + S-ubiquitinyl-[E2 ubiquitin-conjugating enzyme]-L-cysteine.. The catalysed reaction is S-ubiquitinyl-[E1 ubiquitin-activating enzyme]-L-cysteine + [acceptor protein]-L-lysine = [E1 ubiquitin-activating enzyme]-L-cysteine + N(6)-monoubiquitinyl-[acceptor protein]-L-lysine.. The protein operates within protein modification; protein ubiquitination. In terms of biological role, catalyzes the covalent attachment of ubiquitin to other proteins. Acts as an essential factor of the anaphase promoting complex/cyclosome (APC/C), a cell cycle-regulated ubiquitin ligase that is essential for the transition from metaphase to anaphase in mitosis. Involved in both degradation of proteins responsible for maintaining sister chromatid cohesion at the onset of anaphase and of mitotic cyclins A and B at the exit of mitosis. Acts by initiating polyubiquitin chains on APC/C substrates, leading to the degradation of APC/C substrates by the proteasome and promoting mitotic exit. This Spisula solidissima (Atlantic surf-clam) protein is Ubiquitin-conjugating enzyme E2 C (UBE2C).